Consider the following 203-residue polypeptide: Large ribosomal subunit protein uL13 (203 aa).

Ala-2 is subject to N-acetylalanine. A Citrulline modification is found at Arg-59. Phosphoserine; by ZIPK/DAPK3 is present on Ser-77. Arg-140 carries the citrulline modification. At Lys-191 the chain carries N6-acetyllysine.

The protein belongs to the universal ribosomal protein uL13 family. Component of the 60S ribosome. Component of the GAIT complex. Interacts with EIF4G1. In terms of processing, phosphorylation at Ser-77 upon interferon-gamma treatment in monocytes involves a DAPK1-DAPK3 kinase cascade and is causing release from the ribosome, association with the GAIT complex and subsequent involvement in transcript-selective translation inhibition. Citrullinated by PADI4.

It is found in the cytoplasm. Associated with ribosomes but is not required for canonical ribosome function and has extra-ribosomal functions. Component of the GAIT (gamma interferon-activated inhibitor of translation) complex which mediates interferon-gamma-induced transcript-selective translation inhibition in inflammation processes. Upon interferon-gamma activation and subsequent phosphorylation dissociates from the ribosome and assembles into the GAIT complex which binds to stem loop-containing GAIT elements in the 3'-UTR of diverse inflammatory mRNAs (such as ceruplasmin) and suppresses their translation. In the GAIT complex interacts with m7G cap-bound eIF4G at or near the eIF3-binding site and blocks the recruitment of the 43S ribosomal complex. Involved in methylation of rRNA. The protein is Large ribosomal subunit protein uL13 (RPL13A) of Homo sapiens (Human).